The following is a 198-amino-acid chain: Na(+)-translocating NADH-quinone reductase subunit E (198 aa).

The next 6 helical transmembrane spans lie at 11-31 (SVFI…FLAV), 35-55 (VSTA…SVPV), 77-97 (FLNF…LEMF), 110-130 (GIFL…SFMV), 140-160 (VVYG…LAGL), and 176-196 (LGIT…FSGI).

This sequence belongs to the NqrDE/RnfAE family. Composed of six subunits; NqrA, NqrB, NqrC, NqrD, NqrE and NqrF.

The protein resides in the cell inner membrane. The catalysed reaction is a ubiquinone + n Na(+)(in) + NADH + H(+) = a ubiquinol + n Na(+)(out) + NAD(+). NQR complex catalyzes the reduction of ubiquinone-1 to ubiquinol by two successive reactions, coupled with the transport of Na(+) ions from the cytoplasm to the periplasm. NqrA to NqrE are probably involved in the second step, the conversion of ubisemiquinone to ubiquinol. This chain is Na(+)-translocating NADH-quinone reductase subunit E, found in Mannheimia succiniciproducens (strain KCTC 0769BP / MBEL55E).